Reading from the N-terminus, the 446-residue chain is tRNA-2-methylthio-N(6)-dimethylallyladenosine synthase (446 aa).

An MTTase N-terminal domain is found at Lys-8–Ala-124. Cys-17, Cys-53, Cys-87, Cys-160, Cys-164, and Cys-167 together coordinate [4Fe-4S] cluster. Residues Arg-146–Ala-378 enclose the Radical SAM core domain. A TRAM domain is found at Ala-381 to Glu-442.

The protein belongs to the methylthiotransferase family. MiaB subfamily. As to quaternary structure, monomer. The cofactor is [4Fe-4S] cluster.

The protein resides in the cytoplasm. It catalyses the reaction N(6)-dimethylallyladenosine(37) in tRNA + (sulfur carrier)-SH + AH2 + 2 S-adenosyl-L-methionine = 2-methylsulfanyl-N(6)-dimethylallyladenosine(37) in tRNA + (sulfur carrier)-H + 5'-deoxyadenosine + L-methionine + A + S-adenosyl-L-homocysteine + 2 H(+). Its function is as follows. Catalyzes the methylthiolation of N6-(dimethylallyl)adenosine (i(6)A), leading to the formation of 2-methylthio-N6-(dimethylallyl)adenosine (ms(2)i(6)A) at position 37 in tRNAs that read codons beginning with uridine. In Erythrobacter litoralis (strain HTCC2594), this protein is tRNA-2-methylthio-N(6)-dimethylallyladenosine synthase.